A 199-amino-acid chain; its full sequence is Protein extra-macrochaetae (199 aa).

One can recognise a bHLH domain in the interval 23–75; sequence RIQRHPTHRGDGENAEMKMYLSKLKDLVPFMPKNRKLTKLEIIQHVIDYICDL. Phosphoserine is present on Ser-106. Residues 127–199 are disordered; sequence RLNAEQPAKV…QNAEKDSRQS (73 aa). Low complexity predominate over residues 161-182; it reads QQHQQQQQLQLQQQQLQSQQQL.

Heterodimer with other HLH proteins.

The protein localises to the nucleus. Functionally, participates in sensory organ patterning by antagonizing the neurogenic activity of the Achaete-scute complex (AS-C). It lacks a basic DNA-binding domain but is able to form heterodimers with other HLH proteins, thereby inhibiting DNA binding. May sequester proneural proteins in complexes inefficient for DNA interaction. EMC also affects vein differentiation. Inhibits the activity of AS-C proteins by forming an non-DNA binding heterodimer. The sequence is that of Protein extra-macrochaetae (emc) from Drosophila melanogaster (Fruit fly).